The following is a 327-amino-acid chain: MSVASPAAAGLDTLCLAGPTASGKTAAALALAQVLPVEVVSVDSALVYRGMDIGTAKPSAAERALVPHHLIDLIEPCAAYSAAQFVADARRAMAEIRARGRLPLLVGGTMLYFKALFDGIDALPPADPALRAALDAEARTRGWPALHAELATVDPVTAARLAPNDAQRVQRALEVWRATGQPLSSFHSGRFDVASAAPPRTALISLEPTDRGWLHARIGERFAAMLQAGLVDEVRRLRARGDLHADLPAMRCVGYRQAWAALDAGDPPDLARLQAEGAAATRQLAKRQLTWLRGMPWRRTVACDAPDASAQVVALARQLVDEREAAA.

18–25 (GPTASGKT) contributes to the ATP binding site. A substrate-binding site is contributed by 20–25 (TASGKT). Interaction with substrate tRNA regions lie at residues 43-46 (DSAL), 167-171 (QRVQR), and 251-256 (RCVGYR).

Belongs to the IPP transferase family. Monomer. Mg(2+) is required as a cofactor.

The catalysed reaction is adenosine(37) in tRNA + dimethylallyl diphosphate = N(6)-dimethylallyladenosine(37) in tRNA + diphosphate. In terms of biological role, catalyzes the transfer of a dimethylallyl group onto the adenine at position 37 in tRNAs that read codons beginning with uridine, leading to the formation of N6-(dimethylallyl)adenosine (i(6)A). This chain is tRNA dimethylallyltransferase, found in Methylibium petroleiphilum (strain ATCC BAA-1232 / LMG 22953 / PM1).